Reading from the N-terminus, the 841-residue chain is GRIP1-associated protein 1 (841 aa).

An N-acetylalanine modification is found at alanine 2. Coiled-coil stretches lie at residues 4-161 and 208-641; these read ALSE…YGKE and EQLQ…NSKS. Disordered regions lie at residues 532 to 551 and 558 to 580; these read AEESLQQQQQEQEEALKQCR and LKGKEEELQDVRDQLEQAQEERD. Phosphoserine occurs at positions 655, 666, 668, 669, 688, 690, 691, and 692. The disordered stretch occupies residues 681–706; sequence SSAVPARSLSSSPQAQPPRPAELSDE. The segment covering 682 to 694 has biased composition (low complexity); that stretch reads SAVPARSLSSSPQ. 2 coiled-coil regions span residues 701–735 and 785–814; these read AELSDEEVAELFQRLAETQQEKWMLEEKVKHLEVS and DENLREMNKKLQNMLEEQLTKNMHLHKDME.

Interacts with GRIP1, GRIP2 and AMPA receptors. Interacts (via C-terminus) with MAPK8/JNK1 and MAP3K1/MEKK1; the interaction promotes MAP3K1-mediated phosphorylation of MAPK8. Interacts (via N-terminus) with RAB4A (in GTP-bound form). Interacts (via C-terminus) with STX12. Post-translationally, proteolytically cleaved by caspase-3. A minor C-terminal proteolytic fragment of 30 kDa is produced. Proteolytic cleavage is required for JNK signaling activation.

The protein resides in the early endosome membrane. It localises to the recycling endosome membrane. Its subcellular location is the cell projection. The protein localises to the axon. It is found in the dendrite. The protein resides in the synapse. Its function is as follows. Regulates the endosomal recycling back to the neuronal plasma membrane, possibly by connecting early and late recycling endosomal domains and promoting segregation of recycling endosomes from early endosomal membranes. Involved in the localization of recycling endosomes to dendritic spines, thereby playing a role in the maintenance of dendritic spine morphology. Required for the activity-induced AMPA receptor recycling to dendrite membranes and for long-term potentiation and synaptic plasticity. Functionally, functions as a scaffold protein to facilitate MAP3K1/MEKK1-mediated activation of the JNK1 kinase by phosphorylation, possibly by bringing MAP3K1/MEKK1 and JNK1 in close proximity. In Homo sapiens (Human), this protein is GRIP1-associated protein 1.